The primary structure comprises 165 residues: Regulator of ribonuclease activity A (165 aa).

The protein belongs to the RraA family. In terms of assembly, homotrimer. Binds to both RNA-binding sites in the C-terminal region of Rne and to RhlB.

The protein localises to the cytoplasm. Functionally, globally modulates RNA abundance by binding to RNase E (Rne) and regulating its endonucleolytic activity. Can modulate Rne action in a substrate-dependent manner by altering the composition of the degradosome. Modulates RNA-binding and helicase activities of the degradosome. The chain is Regulator of ribonuclease activity A from Actinobacillus pleuropneumoniae serotype 5b (strain L20).